The sequence spans 638 residues: Growth hormone receptor (638 aa).

The N-terminal stretch at M1–A18 is a signal peptide. Topologically, residues F19–R264 are extracellular. Residues G30–P51 are disordered. N46 carries N-linked (GlcNAc...) asparagine glycosylation. 2 cysteine pairs are disulfide-bonded: C56–C66 and C101–C112. N115 carries an N-linked (GlcNAc...) asparagine glycan. A disulfide bridge links C126 with C140. The Fibronectin type-III domain occupies P151–M254. Residues N156, N161, and N200 are each glycosylated (N-linked (GlcNAc...) asparagine). A WSXWS motif motif is present at residues Y240–S244. The required for ADAM17-mediated proteolysis stretch occupies residues E260 to D262. Residues F265–S288 form a helical membrane-spanning segment. The Cytoplasmic portion of the chain corresponds to K289–P638. The interval K294–A379 is required for JAK2 binding. A Box 1 motif motif is present at residues I297–K305. The UbE motif motif lies at D340–D349. S341 bears the Phosphoserine mark. Phosphotyrosine is present on Y487. Residues T573–V592 are disordered. Y595 is subject to Phosphotyrosine.

Belongs to the type I cytokine receptor family. Type 1 subfamily. On growth hormone (GH) binding, forms homodimers and binds JAK2 via a box 1-containing domain. In terms of processing, the soluble form (GHBP) is produced by phorbol ester-promoted proteolytic cleavage at the cell surface (shedding) by ADAM17/TACE. Shedding is inhibited by growth hormone (GH) binding to the receptor probably due to a conformational change in GHR rendering the receptor inaccessible to ADAM17. On GH binding, phosphorylated on tyrosine residues in the cytoplasmic domain by JAK2. Post-translationally, ubiquitinated by the ECS(SOCS2) complex following ligand-binding and phosphorylation by JAK2, leading to its degradation by the proteasome. Regulation by the ECS(SOCS2) complex acts as a negative feedback loop of growth hormone receptor signaling. Ubiquitination is not sufficient for GHR internalization.

Its subcellular location is the cell membrane. The protein localises to the secreted. Receptor for pituitary gland growth hormone involved in regulating postnatal body growth. On ligand binding, couples to, and activates the JAK2/STAT5 pathway. In terms of biological role, the soluble form acts as a reservoir of growth hormone in plasma and may be a modulator/inhibitor of GH signaling. In Oryctolagus cuniculus (Rabbit), this protein is Growth hormone receptor.